A 475-amino-acid chain; its full sequence is 3-isopropylmalate dehydratase large subunit (475 aa).

The [4Fe-4S] cluster site is built by C349, C409, and C412.

Belongs to the aconitase/IPM isomerase family. LeuC type 1 subfamily. Heterodimer of LeuC and LeuD. The cofactor is [4Fe-4S] cluster.

The enzyme catalyses (2R,3S)-3-isopropylmalate = (2S)-2-isopropylmalate. The protein operates within amino-acid biosynthesis; L-leucine biosynthesis; L-leucine from 3-methyl-2-oxobutanoate: step 2/4. Catalyzes the isomerization between 2-isopropylmalate and 3-isopropylmalate, via the formation of 2-isopropylmaleate. This chain is 3-isopropylmalate dehydratase large subunit, found in Cereibacter sphaeroides (strain KD131 / KCTC 12085) (Rhodobacter sphaeroides).